A 396-amino-acid chain; its full sequence is Tryptophan synthase beta chain (396 aa).

Position 90 is an N6-(pyridoxal phosphate)lysine (lysine 90).

It belongs to the TrpB family. Tetramer of two alpha and two beta chains. The cofactor is pyridoxal 5'-phosphate.

It carries out the reaction (1S,2R)-1-C-(indol-3-yl)glycerol 3-phosphate + L-serine = D-glyceraldehyde 3-phosphate + L-tryptophan + H2O. The protein operates within amino-acid biosynthesis; L-tryptophan biosynthesis; L-tryptophan from chorismate: step 5/5. The beta subunit is responsible for the synthesis of L-tryptophan from indole and L-serine. In Clostridium kluyveri (strain NBRC 12016), this protein is Tryptophan synthase beta chain.